A 543-amino-acid chain; its full sequence is Carboxypeptidase Y homolog A (543 aa).

Positions 1–17 are cleaved as a signal peptide; sequence MRVAASALLAGAASAAV. The propeptide occupies 18-128; it reads APQQQILKFP…KLEQFDLRVK (111 aa). 5 disulfides stabilise this stretch: cysteine 182–cysteine 421, cysteine 316–cysteine 330, cysteine 340–cysteine 363, cysteine 347–cysteine 356, and cysteine 385–cysteine 391. The N-linked (GlcNAc...) asparagine glycan is linked to asparagine 213. Serine 269 is an active-site residue. Residue aspartate 460 is part of the active site. Asparagine 508 is a glycosylation site (N-linked (GlcNAc...) asparagine). Histidine 519 is a catalytic residue.

Belongs to the peptidase S10 family.

The protein resides in the vacuole. The enzyme catalyses Release of a C-terminal amino acid with broad specificity.. Vacuolar carboxypeptidase involved in degradation of small peptides. Digests preferentially peptides containing an aliphatic or hydrophobic residue in P1' position, as well as methionine, leucine or phenylalanine in P1 position of ester substrate. This is Carboxypeptidase Y homolog A (CPYA) from Phaeosphaeria nodorum (strain SN15 / ATCC MYA-4574 / FGSC 10173) (Glume blotch fungus).